The sequence spans 223 residues: Alpha-S2-casein (223 aa).

The first 15 residues, 1 to 15 (MKFFIFTCLLAVALA), serve as a signal peptide directing secretion. Phosphoserine is present on residues Ser23, Ser24, Ser25, Ser72, Ser73, Ser74, Ser77, Ser145, Ser147, Ser151, and Ser159. A repeat spans 77 to 141 (SAEVAPEEIK…AGPFTPTVNR (65 aa)). The segment at residues 159 to 223 (STEVFTKKTK…TNAIPYVRYL (65 aa)) is a repeat.

Belongs to the alpha-casein family. As to expression, mammary gland specific. Secreted in milk.

It localises to the secreted. Important role in the capacity of milk to transport calcium phosphate. This Capra hircus (Goat) protein is Alpha-S2-casein (CSN1S2).